Here is a 510-residue protein sequence, read N- to C-terminus: ATP synthase subunit alpha (510 aa).

169-176 (GDRQTGKT) is an ATP binding site.

Belongs to the ATPase alpha/beta chains family. In terms of assembly, F-type ATPases have 2 components, CF(1) - the catalytic core - and CF(0) - the membrane proton channel. CF(1) has five subunits: alpha(3), beta(3), gamma(1), delta(1), epsilon(1). CF(0) has three main subunits: a(1), b(2) and c(9-12). The alpha and beta chains form an alternating ring which encloses part of the gamma chain. CF(1) is attached to CF(0) by a central stalk formed by the gamma and epsilon chains, while a peripheral stalk is formed by the delta and b chains.

The protein localises to the cell membrane. It catalyses the reaction ATP + H2O + 4 H(+)(in) = ADP + phosphate + 5 H(+)(out). Functionally, produces ATP from ADP in the presence of a proton gradient across the membrane. The alpha chain is a regulatory subunit. The chain is ATP synthase subunit alpha from Thermomicrobium roseum (strain ATCC 27502 / DSM 5159 / P-2).